We begin with the raw amino-acid sequence, 109 residues long: MKINNFIYIFLAAYLATFFRLTLNNNFFISIIGSFLVGFFVSKRLSYSNEKILFSGFFSCFTSFSGFIYFLYKILNQGDWIKFIIFFNLIIILNLLTMIFGFWISRKIT.

3 helical membrane passes run 21–41 (LTLN…GFFV), 52–72 (ILFS…YFLY), and 84–104 (IIFF…GFWI).

This sequence belongs to the fluoride channel Fluc/FEX (TC 1.A.43) family.

The protein localises to the cell inner membrane. It catalyses the reaction fluoride(in) = fluoride(out). Functionally, fluoride-specific ion channel. Important for reducing fluoride concentration in the cell, thus reducing its toxicity. This Prochlorococcus marinus (strain MIT 9301) protein is Fluoride-specific ion channel FluC.